The following is a 703-amino-acid chain: Solute carrier family 28 member 3 (703 aa).

Residues 1–19 (MSRADPGKNSEPSESKMSL) are compositionally biased toward basic and acidic residues. Residues 1–93 (MSRADPGKNS…DPEDDSEDEH (93 aa)) are disordered. Over 1–117 (MSRADPGKNS…FCRKHRVVLR (117 aa)) the chain is Cytoplasmic. Polar residues predominate over residues 44–61 (QNTPGNSTVRNRVVQSGE). The segment covering 63–72 (GHAKQDDRQI) has biased composition (basic and acidic residues). A helical membrane pass occupies residues 118-138 (STIWAVLLTGFLALVIAACAI). At 139–143 (NFHRA) the chain is on the extracellular side. Residues 144–164 (LPLFVITLVTIFFVIWDHLMA) form a helical membrane-spanning segment. Topologically, residues 165–188 (KYEQRIDDFLSPGRRLLDRHWFWL) are cytoplasmic. The chain crosses the membrane as a helical span at residues 189-209 (KWVVWSSLILAIILWLSLDTA). Over 210 to 212 (KLG) the chain is Extracellular. The helical transmembrane segment at 213–234 (QQNLVSFGGLIMYLILLFLFSK) threads the bilayer. The Cytoplasmic portion of the chain corresponds to 235 to 242 (HPTRVYWR). A helical membrane pass occupies residues 243–262 (PVFWGIGLQFLLGLLILRTR). Residues 263 to 299 (PGFVAFDWMGRQVQTFLGYTDTGARFVFGEKYTDHFF) lie on the Extracellular side of the membrane. Residues 300-320 (AFKILPIVVFFSTVMSMLYYL) traverse the membrane as a helical segment. Topologically, residues 321 to 344 (GLMQWIIRKVGWLMLVTMGSSPIE) are cytoplasmic. Residues 345-363 (SVVAAGNIFIGQTESPLLV) constitute an intramembrane region (helical). Topologically, residues 364–376 (QPYLPHVTKSELH) are cytoplasmic. Residues 377-399 (TIMTAGFATIAGSVLGAYISFGV) traverse the membrane as a helical segment. Over 400–401 (SS) the chain is Extracellular. A helical transmembrane segment spans residues 402–423 (THLLTASVMSAPAALAVAKLFW). Over 424–458 (PETEKPKITLKSAMKMENGDSRNLLEAASQGASSS) the chain is Cytoplasmic. The helical transmembrane segment at 459 to 484 (IPLVANIAANLIAFLALLSFVNSALS) threads the bilayer. Topologically, residues 485 to 522 (WFGSMFNYPELSFELICSYIFMPFSFMMGVDWQDSFMV) are extracellular. The segment at residues 523 to 542 (AKLIGYKTFFNEFVAYDHLS) is an intramembrane region (helical). Over 543–581 (KLINLRKAAGPKFVNGVQQYMSIRSETIATYALCGFANF) the chain is Extracellular. Residues 582 to 592 (GSLGIVIGGLT) traverse the membrane as a helical segment. Topologically, residues 593 to 605 (SIAPSRKRDIASG) are cytoplasmic. The chain crosses the membrane as a helical span at residues 606 to 628 (AMRALIAGTIACFMTACIAGILS). Topologically, residues 629 to 703 (DTPVDINCHH…LNCNWIPNKL (75 aa)) are extracellular.

Belongs to the concentrative nucleoside transporter (CNT) (TC 2.A.41) family. In terms of assembly, homotrimer.

The protein localises to the cell membrane. It carries out the reaction thymidine(out) + 2 Na(+)(out) = thymidine(in) + 2 Na(+)(in). The enzyme catalyses cytidine(out) + 2 Na(+)(out) = cytidine(in) + 2 Na(+)(in). It catalyses the reaction uridine(out) + 2 Na(+)(out) = uridine(in) + 2 Na(+)(in). The catalysed reaction is adenosine(out) + 2 Na(+)(out) = adenosine(in) + 2 Na(+)(in). It carries out the reaction guanosine(out) + 2 Na(+)(out) = guanosine(in) + 2 Na(+)(in). The enzyme catalyses inosine(out) + 2 Na(+)(out) = inosine(in) + 2 Na(+)(in). In terms of biological role, sodium-dependent, pyrimidine- and purine-selective. Involved in the homeostasis of endogenous nucleosides. Exhibits the transport characteristics of the nucleoside transport system cib or N3 subtype (N3/cib) (with marked transport of both thymidine and inosine). Employs a 2:1 sodium/nucleoside ratio. Also able to transport gemcitabine, 3'-azido-3'-deoxythymidine (AZT), ribavirin and 3-deazauridine. This Mus musculus (Mouse) protein is Solute carrier family 28 member 3 (Slc28a3).